A 397-amino-acid polypeptide reads, in one-letter code: T-box transcription factor TBX19 (397 aa).

A DNA-binding region (T-box) is located at residues 48 to 216 (LWQRFREVTN…YNPFAKAFLD (169 aa)). The disordered stretch occupies residues 220-248 (RNHPKDAPEAASEGQHMTYSHSPQAPHGC).

The protein resides in the nucleus. In terms of biological role, may be involved in the initial formation of the chordamesoderm. This is T-box transcription factor TBX19 from Gallus gallus (Chicken).